A 490-amino-acid polypeptide reads, in one-letter code: Katanin p60 ATPase-containing subunit A-like 1 (490 aa).

The residue at position 1 (M1) is an N-acetylmethionine. A disordered region spans residues 95–184 (DPAVWPPPVP…DGEMPKFDGA (90 aa)). Over residues 116 to 127 (PNREVRPLRKEM) the composition is skewed to basic and acidic residues. The span at 128 to 139 (AGVGARGPVGRA) shows a compositional bias: low complexity. Over residues 143–169 (SKSEKPSTSRDKDCRARGRDDKGRKNM) the composition is skewed to basic and acidic residues. The residue at position 174 (S174) is a Phosphoserine. An ATP-binding site is contributed by 248–255 (GPPGTGKT).

It belongs to the AAA ATPase family. Katanin p60 subunit A1 subfamily. A-like 1 sub-subfamily. As to quaternary structure, interacts with KATNB1 and KATNBL1.

The protein localises to the cytoplasm. Its subcellular location is the cytoskeleton. The protein resides in the spindle pole. It localises to the spindle. It catalyses the reaction n ATP + n H2O + a microtubule = n ADP + n phosphate + (n+1) alpha/beta tubulin heterodimers.. Its function is as follows. Regulates microtubule dynamics in Sertoli cells, a process that is essential for spermiogenesis and male fertility. Severs microtubules in an ATP-dependent manner, promoting rapid reorganization of cellular microtubule arrays. Has microtubule-severing activity in vitro. This chain is Katanin p60 ATPase-containing subunit A-like 1, found in Papio anubis (Olive baboon).